Here is a 232-residue protein sequence, read N- to C-terminus: Cytidylate kinase (232 aa).

19 to 27 contacts ATP; the sequence is GPAGVGKTT.

This sequence belongs to the cytidylate kinase family. Type 1 subfamily.

The protein localises to the cytoplasm. The enzyme catalyses CMP + ATP = CDP + ADP. It catalyses the reaction dCMP + ATP = dCDP + ADP. This is Cytidylate kinase from Nitratidesulfovibrio vulgaris (strain DP4) (Desulfovibrio vulgaris).